The chain runs to 457 residues: Bifunctional protein GlmU (457 aa).

The tract at residues Met1–Arg230 is pyrophosphorylase. UDP-N-acetyl-alpha-D-glucosamine-binding positions include Leu9–Gly12, Lys23, Gln73, and Gly78–Thr79. Asp103 is a binding site for Mg(2+). UDP-N-acetyl-alpha-D-glucosamine contacts are provided by Gly140, Glu155, Asn170, and Asn228. Mg(2+) is bound at residue Asn228. The linker stretch occupies residues Ile231–Asn251. An N-acetyltransferase region spans residues Gly252–Lys457. UDP-N-acetyl-alpha-D-glucosamine contacts are provided by Arg333 and Lys351. The active-site Proton acceptor is His363. Positions 366 and 377 each coordinate UDP-N-acetyl-alpha-D-glucosamine. Acetyl-CoA-binding positions include Asn386–Tyr387, Ala423, and Arg440.

It in the N-terminal section; belongs to the N-acetylglucosamine-1-phosphate uridyltransferase family. In the C-terminal section; belongs to the transferase hexapeptide repeat family. Homotrimer. It depends on Mg(2+) as a cofactor.

It localises to the cytoplasm. The enzyme catalyses alpha-D-glucosamine 1-phosphate + acetyl-CoA = N-acetyl-alpha-D-glucosamine 1-phosphate + CoA + H(+). It carries out the reaction N-acetyl-alpha-D-glucosamine 1-phosphate + UTP + H(+) = UDP-N-acetyl-alpha-D-glucosamine + diphosphate. It participates in nucleotide-sugar biosynthesis; UDP-N-acetyl-alpha-D-glucosamine biosynthesis; N-acetyl-alpha-D-glucosamine 1-phosphate from alpha-D-glucosamine 6-phosphate (route II): step 2/2. The protein operates within nucleotide-sugar biosynthesis; UDP-N-acetyl-alpha-D-glucosamine biosynthesis; UDP-N-acetyl-alpha-D-glucosamine from N-acetyl-alpha-D-glucosamine 1-phosphate: step 1/1. It functions in the pathway bacterial outer membrane biogenesis; LPS lipid A biosynthesis. Its function is as follows. Catalyzes the last two sequential reactions in the de novo biosynthetic pathway for UDP-N-acetylglucosamine (UDP-GlcNAc). The C-terminal domain catalyzes the transfer of acetyl group from acetyl coenzyme A to glucosamine-1-phosphate (GlcN-1-P) to produce N-acetylglucosamine-1-phosphate (GlcNAc-1-P), which is converted into UDP-GlcNAc by the transfer of uridine 5-monophosphate (from uridine 5-triphosphate), a reaction catalyzed by the N-terminal domain. The chain is Bifunctional protein GlmU from Listeria monocytogenes serotype 4b (strain F2365).